The sequence spans 122 residues: Large ribosomal subunit protein uL14 (122 aa).

It belongs to the universal ribosomal protein uL14 family. Part of the 50S ribosomal subunit. Forms a cluster with proteins L3 and L19. In the 70S ribosome, L14 and L19 interact and together make contacts with the 16S rRNA in bridges B5 and B8.

In terms of biological role, binds to 23S rRNA. Forms part of two intersubunit bridges in the 70S ribosome. This chain is Large ribosomal subunit protein uL14, found in Pelagibacter ubique (strain HTCC1062).